We begin with the raw amino-acid sequence, 258 residues long: uncharacterized protein (258 aa).

Helical transmembrane passes span 24-44, 70-90, 100-120, 130-150, 157-177, and 181-201; these read IPLF…VNIF, PLVH…FLLM, LCTI…AYLI, VYVG…LNLF, LLNL…VLGL, and FSIT…FSFA. His188 is a catalytic residue.

It belongs to the peptidase S54 family.

Its subcellular location is the golgi apparatus membrane. This is an uncharacterized protein from Schizosaccharomyces pombe (strain 972 / ATCC 24843) (Fission yeast).